The primary structure comprises 296 residues: Indole-3-glycerol phosphate synthase (296 aa).

The protein belongs to the TrpC family.

It carries out the reaction 1-(2-carboxyphenylamino)-1-deoxy-D-ribulose 5-phosphate + H(+) = (1S,2R)-1-C-(indol-3-yl)glycerol 3-phosphate + CO2 + H2O. The protein operates within amino-acid biosynthesis; L-tryptophan biosynthesis; L-tryptophan from chorismate: step 4/5. This Microcystis aeruginosa (strain NIES-843 / IAM M-2473) protein is Indole-3-glycerol phosphate synthase.